A 291-amino-acid chain; its full sequence is Protease HtpX (291 aa).

A run of 2 helical transmembrane segments spans residues 4–24 and 36–56; these read ILLFLATNLAVLVIASITLKL and GSLLVFCAVFGFAGSLVSLFI. Histidine 142 contacts Zn(2+). Residue glutamate 143 is part of the active site. Position 146 (histidine 146) interacts with Zn(2+). 2 helical membrane passes run 150 to 170 and 193 to 213; these read GDMVTLALIQGVVNTFVMFFA and FVATIFAELVLGILASIIVMW. Glutamate 219 contributes to the Zn(2+) binding site.

This sequence belongs to the peptidase M48B family. Zn(2+) serves as cofactor.

It is found in the cell inner membrane. The polypeptide is Protease HtpX (Pseudomonas aeruginosa (strain LESB58)).